Consider the following 201-residue polypeptide: LexA repressor 1 (201 aa).

The H-T-H motif DNA-binding region spans 27-47 (LAEIAQAFGFASRNAAQKHVQ). Residues Ser122 and Lys159 each act as for autocatalytic cleavage activity in the active site.

The protein belongs to the peptidase S24 family. As to quaternary structure, homodimer.

The catalysed reaction is Hydrolysis of Ala-|-Gly bond in repressor LexA.. Represses a number of genes involved in the response to DNA damage (SOS response), including recA and lexA. In the presence of single-stranded DNA, RecA interacts with LexA causing an autocatalytic cleavage which disrupts the DNA-binding part of LexA, leading to derepression of the SOS regulon and eventually DNA repair. This Xanthomonas axonopodis pv. citri (strain 306) protein is LexA repressor 1.